The following is a 317-amino-acid chain: uncharacterized protein (317 aa).

A compositionally biased stretch (basic and acidic residues) spans 1 to 11 (MASAGAERRPG). The interval 1–164 (MASAGAERRP…KAKKRKSLGA (164 aa)) is disordered. Residues 19–34 (GQGQLTEEPGSAQTSE) are compositionally biased toward polar residues. Composition is skewed to basic and acidic residues over residues 47–58 (HEARGTQSEDQR) and 71–92 (EGPKLGEERPKPHAGALEERGP). Composition is skewed to basic residues over residues 100 to 110 (RPRHGPKRKPV) and 151 to 161 (KQHKKAKKRKS).

This is an uncharacterized protein from Homo sapiens (Human).